The following is a 470-amino-acid chain: UDP-glycosyltransferase 75C1 (470 aa).

The Proton acceptor role is filled by H16. H16 serves as a coordination point for an anthocyanidin. The UDP-alpha-D-glucose site is built by Q347, H362, W365, N366, S367, E370, D386, and Q387.

This sequence belongs to the UDP-glycosyltransferase family. In terms of tissue distribution, expressed in flowers and fruits, especially in pulp, and, at lower levels, in seeds.

The protein resides in the cytoplasm. The protein localises to the nucleus. The enzyme catalyses 2-cis-(+)-abscisate + UDP-alpha-D-glucose = beta-D-glucopyranosyl cis-(+)-abscisate + UDP. The catalysed reaction is (indol-3-yl)acetate + UDP-alpha-D-glucose = 1-O-(indol-3-ylacetyl)-beta-D-glucose + UDP. In terms of biological role, glucosyltransferase acting on both abscisic acid (ABA) and auxin (IAA). Required for ABA-mediated fruit ripening, seed germination, and negative responses to drought. The sequence is that of UDP-glycosyltransferase 75C1 from Solanum lycopersicum (Tomato).